The sequence spans 637 residues: Neuroendocrine convertase 2 (637 aa).

Residues 1-24 form the signal peptide; that stretch reads MEGGCGSQWKAAGFLFCVMVFASA. A propeptide spanning residues 25–108 is cleaved from the precursor; that stretch reads ERPVFTNHFL…QQEGFDRKKR (84 aa). The Peptidase S8 domain maps to 128–452; the sequence is QWYLFNTGQA…YGVLDAGAMV (325 aa). Residues Asp166 and His207 each act as charge relay system in the active site. Cystine bridges form between Cys224/Cys375 and Cys316/Cys346. Asn374 carries N-linked (GlcNAc...) asparagine glycosylation. The active-site Charge relay system is Ser383. One can recognise a P/Homo B domain in the interval 460-596; sequence TVPERFHCVG…TLMLHGTQSA (137 aa). Cys467 and Cys493 are disulfide-bonded. N-linked (GlcNAc...) asparagine glycosylation is found at Asn513 and Asn523.

This sequence belongs to the peptidase S8 family. Furin subfamily.

Its subcellular location is the cytoplasmic vesicle. It is found in the secretory vesicle. It localises to the secreted. The catalysed reaction is Release of protein hormones and neuropeptides from their precursors, generally by hydrolysis of -Lys-Arg-|- bonds.. Functionally, serine endopeptidase which is involved in the processing of hormone and other protein precursors at sites comprised of pairs of basic amino acid residues. Responsible for the release of glucagon from proglucagon in pancreatic A cells. The polypeptide is Neuroendocrine convertase 2 (Pcsk2) (Mus musculus (Mouse)).